Reading from the N-terminus, the 88-residue chain is Small ribosomal subunit protein bS20 (88 aa).

The span at 1–12 (MANHKSALKRAK) shows a compositional bias: basic residues. The interval 1 to 23 (MANHKSALKRAKQNTIKQMRNRS) is disordered.

This sequence belongs to the bacterial ribosomal protein bS20 family.

Functionally, binds directly to 16S ribosomal RNA. This Desulfatibacillum aliphaticivorans protein is Small ribosomal subunit protein bS20.